Reading from the N-terminus, the 307-residue chain is MIRHFLRDDDLSPAEQAEVLELAAELKKDPVSRRPLQGPRGVAVIFDKNSTRTRFSFELGIAQLGGHAVVVDSGSTQLGRDETLQDTAKVLSRYVDAIVWRTFGQERLDAMASVATVPVINALSDEFHPCQVLADLQTIAERKGALRGLRLSYFGDGANNMAHSLLLGGVTAGIHVTVAAPEGFLPDPSVRAAAERRAQDTGASVTVTADAHAAAAGADVLVTDTWTSMGQENDGLDRVKPFRPFQLNSRLLALADSDAIVLHCLPAHRGDEITDAVMDGPASAVWDEAENRLHAQKALLVWLLERS.

Carbamoyl phosphate is bound by residues 50–53 (STRT), glutamine 77, arginine 101, and 128–131 (HPCQ). Residues asparagine 160, aspartate 224, and 228–229 (SM) each bind L-ornithine. Carbamoyl phosphate is bound by residues 264 to 265 (CL) and arginine 292.

The protein belongs to the aspartate/ornithine carbamoyltransferase superfamily. OTCase family. Homotrimer.

It localises to the cytoplasm. The enzyme catalyses carbamoyl phosphate + L-ornithine = L-citrulline + phosphate + H(+). It participates in amino-acid biosynthesis; L-arginine biosynthesis; L-arginine from L-ornithine and carbamoyl phosphate: step 1/3. Reversibly catalyzes the transfer of the carbamoyl group from carbamoyl phosphate (CP) to the N(epsilon) atom of ornithine (ORN) to produce L-citrulline, which is a substrate for argininosuccinate synthetase, the enzyme involved in the final step in arginine biosynthesis. This Mycobacterium bovis (strain ATCC BAA-935 / AF2122/97) protein is Ornithine carbamoyltransferase (argF).